We begin with the raw amino-acid sequence, 115 residues long: Putative membrane protein insertion efficiency factor (115 aa).

It belongs to the UPF0161 family.

It localises to the cell membrane. Its function is as follows. Could be involved in insertion of integral membrane proteins into the membrane. The protein is Putative membrane protein insertion efficiency factor of Mycobacterium avium (strain 104).